Reading from the N-terminus, the 236-residue chain is Uridylate kinase (236 aa).

9–12 (KFSG) lines the ATP pocket. Residues 17-22 (GNSGFG) form an involved in allosteric activation by GTP region. Residue glycine 51 coordinates UMP. Residues glycine 52 and arginine 56 each coordinate ATP. Residues aspartate 72 and 133-140 (TGNPFFTT) contribute to the UMP site. ATP contacts are provided by threonine 160, tyrosine 166, and aspartate 169.

The protein belongs to the UMP kinase family. In terms of assembly, homohexamer.

The protein localises to the cytoplasm. The catalysed reaction is UMP + ATP = UDP + ADP. Its pathway is pyrimidine metabolism; CTP biosynthesis via de novo pathway; UDP from UMP (UMPK route): step 1/1. With respect to regulation, allosterically activated by GTP. Inhibited by UTP. Its function is as follows. Catalyzes the reversible phosphorylation of UMP to UDP. In Helicobacter hepaticus (strain ATCC 51449 / 3B1), this protein is Uridylate kinase.